The primary structure comprises 399 residues: PCI domain-containing protein 2 (399 aa).

A2 is subject to N-acetylalanine. A Phosphoserine modification is found at S45. In terms of domain architecture, PCI spans 210-391; sequence ITYKYYVGRK…QKLVVSKQNP (182 aa).

Belongs to the CSN12 family. In terms of assembly, component of the nuclear pore complex (NPC)-associated TREX-2 complex (transcription and export complex 2), composed of at least GANP, 2 copies of ENY2, PCID2, SEM1/DSS1, and either centrin CETN2 or centrin CETN3. The TREX-2 complex also associates with ALYREF/ALY and with the nucleoporin NUP153. Interacts with BRCA2. Interacts with SRCAP chromatin remodeling complex component ZNHIT1; the interaction results in inhibition of SRCAP complex activity, preventing the deposition of histone variant H2AZ1/H2A.Z to lymphoid fate regulator genes and restricting lymphoid lineage commitment. As to expression, highly expressed in bone marrow and haematopoietic progenitor cells but is almost undetectable in mature blood cells.

The protein resides in the cytoplasm. It is found in the nucleus. It localises to the nuclear pore complex. Functionally, required for B-cell survival through the regulation of the expression of cell-cycle checkpoint MAD2L1 protein during B cell differentiation. As a component of the TREX-2 complex, involved in the export of mRNAs to the cytoplasm through the nuclear pores. Binds and stabilizes BRCA2 and is thus involved in the control of R-loop-associated DNA damage and transcription-associated genomic instability. Blocks the activity of the SRCAP chromatin remodeling complex by interacting with SRCAP complex member ZNHIT1 and inhibiting its interaction with the complex. This prevents the deposition of histone variant H2AZ1/H2A.Z at the nucleosomes of key lymphoid fate regulator genes which suppresses their expression and restricts lymphoid lineage commitment. This is PCI domain-containing protein 2 (Pcid2) from Mus musculus (Mouse).